The sequence spans 308 residues: Protein translocase subunit SecF (308 aa).

The next 6 helical transmembrane spans lie at 28–48, 140–160, 164–184, 194–214, 246–266, and 272–292; these read SIIL…NFGI, IEAG…YIWV, WYFG…ALGF, LSTI…SVVI, ILTV…GGEA, and VLVF…SAPI.

It belongs to the SecD/SecF family. SecF subfamily. As to quaternary structure, forms a complex with SecD. Part of the essential Sec protein translocation apparatus which comprises SecA, SecYEG and auxiliary proteins SecDF-YajC and YidC.

Its subcellular location is the cell inner membrane. In terms of biological role, part of the Sec protein translocase complex. Interacts with the SecYEG preprotein conducting channel. SecDF uses the proton motive force (PMF) to complete protein translocation after the ATP-dependent function of SecA. The chain is Protein translocase subunit SecF from Rickettsia felis (strain ATCC VR-1525 / URRWXCal2) (Rickettsia azadi).